A 126-amino-acid polypeptide reads, in one-letter code: Large ribosomal subunit protein bL12 (126 aa).

It belongs to the bacterial ribosomal protein bL12 family. In terms of assembly, homodimer. Part of the ribosomal stalk of the 50S ribosomal subunit. Forms a multimeric L10(L12)X complex, where L10 forms an elongated spine to which 2 to 4 L12 dimers bind in a sequential fashion. Binds GTP-bound translation factors.

Forms part of the ribosomal stalk which helps the ribosome interact with GTP-bound translation factors. Is thus essential for accurate translation. The sequence is that of Large ribosomal subunit protein bL12 from Chlorobaculum parvum (strain DSM 263 / NCIMB 8327) (Chlorobium vibrioforme subsp. thiosulfatophilum).